The following is a 687-amino-acid chain: Chloride channel protein ClC-Kb (687 aa).

Residues 1-50 (MEELVGLREGASKKPVPLQELWGPCPRIRRNIQGGLEWLKERLFRVGEDW) lie on the Cytoplasmic side of the membrane. 2 helical membrane-spanning segments follow: residues 51 to 82 (YFLV…KWLY) and 91 to 111 (LRYL…SGFS). The segment at residues 116-127 (PSSGGSGIPEVK) is an intramembrane region (helical). S121 contributes to the chloride binding site. Helical transmembrane passes span 141–160 (IKNF…TGST) and 161–180 (IFLG…AAYL). An intramembrane region (helical) is located at residues 203-224 (AGAAVGVATVFAAPISGVLFSI). The chain crosses the membrane as a helical span at residues 236–255 (YWRGFFAATCGAFMFHLLAV). Residues E259, E261, D278, and E281 each coordinate Ca(2+). 2 helical membrane passes run 282–310 (IFFF…LFFL) and 325–342 (PLYS…TYPP). Positions 349–360 (ASRLSMSEHLET) form an intramembrane region, helical. 2 consecutive transmembrane segments (helical) span residues 400–420 (GTLV…TTIP) and 421–440 (IPAG…GRLF). Position 426 (F426) interacts with chloride. The helical intramembrane region spans 464-496 (GAYALAGAAAFSGAVTHTLSTALLAFEVTGQLV). The chain crosses the membrane as a helical span at residues 500-520 (PVLMAVLAANAISQSFQPSFY). Residues 521–687 (DGTIIVKKLP…STLTNPPAPK (167 aa)) are Cytoplasmic-facing. 2 consecutive CBS domains span residues 551 to 609 (MNCA…EPAS) and 626 to 687 (CPTQ…PAPK).

This sequence belongs to the chloride channel (TC 2.A.49) family. CLCNKB subfamily. Homodimer. Interacts with BSND. N-glycosylated. Specifically expressed in the kidney, predominantly in the outer medulla and cortex. All nephron segments expressing BSND also express CLCNK proteins.

Its subcellular location is the basolateral cell membrane. It carries out the reaction chloride(in) = chloride(out). The catalysed reaction is iodide(out) = iodide(in). The enzyme catalyses nitrate(in) = nitrate(out). It catalyses the reaction bromide(in) = bromide(out). In terms of biological role, anion-selective channel permeable to small monovalent anions with ion selectivity for chloride &gt; bromide &gt; nitrate &gt; iodide. Forms a homodimeric channel where each subunit has its own ion conduction pathway. May conduct double-barreled currents controlled by two types of gates, two fast gates that control each subunit independently and a slow common gate that opens and shuts off both subunits simultaneously. Assembles with the regulatory subunit BSND/Barttin for sorting at the basolateral plasma membrane domain and functional switch to the ion conducting state. CLCNKB:BSND channels display mostly a linear current-voltage relationship controlled by common gate. Mediates chloride conductance along nephron segments, namely the thick ascending limb of Henle's loop, convoluted tubule and the collecting duct, contributing to the maintenance of systemic acid-base and electrolyte homeostasis. Conducts chloride currents in the stria vascularis of the inner ear to establish the endocochlear potential necessary for normal hearing. The protein is Chloride channel protein ClC-Kb of Mus musculus (Mouse).